A 122-amino-acid chain; its full sequence is Phycocyanin PC645 alpha-2 subunit (122 aa).

(2R,3E)-phycocyanobilin contacts are provided by Asp-54 and Arg-68. Positions 70, 76, 77, and 92 each coordinate mesobiliverdin.

The protein belongs to the phycoerythrin family. In terms of assembly, heterotetramer of 2 different alpha chains and 2 identical beta chains which form 2 alpha-beta heterodimers within the heterotetramer. Post-translationally, contains two phycocyanobilin chromophores and one mesobiliverdin chromophore with binding mediated by both the alpha and beta subunits.

The protein resides in the plastid. The protein localises to the chloroplast thylakoid membrane. In terms of biological role, light-harvesting photosynthetic tetrapyrrole chromophore-protein from the phycobiliprotein complex. The sequence is that of Phycocyanin PC645 alpha-2 subunit from Chroomonas sp. (strain CCMP270).